A 166-amino-acid chain; its full sequence is Small ribosomal subunit protein cS23z (166 aa).

The protein belongs to the chloroplast-specific ribosomal protein cS23 family. In terms of assembly, part of the 30S ribosomal subunit.

The protein resides in the plastid. It localises to the chloroplast. Its function is as follows. Component of the chloroplast ribosome (chloro-ribosome), a dedicated translation machinery responsible for the synthesis of chloroplast genome-encoded proteins, including proteins of the transcription and translation machinery and components of the photosynthetic apparatus. This chain is Small ribosomal subunit protein cS23z, found in Arabidopsis thaliana (Mouse-ear cress).